Reading from the N-terminus, the 612-residue chain is uncharacterized protein (612 aa).

Positions 6 to 32 (CLYCRRRKIKCDKNRPCHNCFVAKREC) form a DNA-binding region, zn(2)-C6 fungal-type.

Its subcellular location is the cytoplasm. It localises to the nucleus. This is an uncharacterized protein from Schizosaccharomyces pombe (strain 972 / ATCC 24843) (Fission yeast).